The chain runs to 603 residues: NADH-ubiquinone oxidoreductase chain 5 (603 aa).

17 helical membrane passes run 4–24 (YATMTTLALTSLIPPILTTFI), 38–58 (SIVASTFIISLFPTTMFLCLD), 87–107 (MMFIPVALFVTWSIMEFSLWY), 114–134 (INQFFKYLLIFLITMLILVTA), 140–160 (LFIGWEGVGIMSFLLIGWWYA), 171–191 (AILYNRIGDIGFILALAWFLL), 210–230 (LIPLLGFLLAAAGKSAQLGLH), 241–261 (TPVSALLHSSTMVVAGVFLLI), 272–292 (LAQTLTLCLGAITTLFAAVCA), 301–320 (IVAFSTSSQLGLMVATIGIG), 325–347 (AFLHICTHAFFKAMLFMCSGSII), 370–390 (STSLAIGSLALMGMPFLTGFY), 407–429 (WALSIILIATSLTSAYSTRMILL), 457–477 (LTIGSLFAGFFITNNILPTSV), 482–502 (IPLYLKLTALSITLLGLLTAL), 537–557 (IPYLGLLMSQNLPLLLLDLIW), and 582–602 (GLIKLYFLSFFFPLLLILLLI).

Belongs to the complex I subunit 5 family. Core subunit of respiratory chain NADH dehydrogenase (Complex I) which is composed of 45 different subunits.

Its subcellular location is the mitochondrion inner membrane. It carries out the reaction a ubiquinone + NADH + 5 H(+)(in) = a ubiquinol + NAD(+) + 4 H(+)(out). Functionally, core subunit of the mitochondrial membrane respiratory chain NADH dehydrogenase (Complex I) which catalyzes electron transfer from NADH through the respiratory chain, using ubiquinone as an electron acceptor. Essential for the catalytic activity and assembly of complex I. The polypeptide is NADH-ubiquinone oxidoreductase chain 5 (MT-ND5) (Gorilla gorilla gorilla (Western lowland gorilla)).